The primary structure comprises 452 residues: Imidazoleglycerol-phosphate dehydratase (452 aa).

Residues 1–233 form a unknown activity region; sequence MASPVQALLL…VGASVVLTPG (233 aa). The imidazoleglycerol-phosphate dehydratase stretch occupies residues 234–452; that stretch reads LGELLDLVPA…GVPSTKGVLA (219 aa).

This sequence belongs to the imidazoleglycerol-phosphate dehydratase family.

The catalysed reaction is D-erythro-1-(imidazol-4-yl)glycerol 3-phosphate = 3-(imidazol-4-yl)-2-oxopropyl phosphate + H2O. The protein operates within amino-acid biosynthesis; L-histidine biosynthesis; L-histidine from 5-phospho-alpha-D-ribose 1-diphosphate: step 6/9. The sequence is that of Imidazoleglycerol-phosphate dehydratase (HIS3) from Phytophthora nicotianae (Potato buckeye rot agent).